Here is a 92-residue protein sequence, read N- to C-terminus: YcgL domain-containing protein SO_2575 (92 aa).

One can recognise a YcgL domain in the interval 1 to 85; the sequence is MLCAVYKSSR…PQVNLLAEHR (85 aa).

The protein is YcgL domain-containing protein SO_2575 of Shewanella oneidensis (strain ATCC 700550 / JCM 31522 / CIP 106686 / LMG 19005 / NCIMB 14063 / MR-1).